Here is a 470-residue protein sequence, read N- to C-terminus: Cannabinoid receptor type 1B (470 aa).

The Extracellular portion of the chain corresponds to 1 to 113 (MKLALHRIAG…CFMILTPAQQ (113 aa)). Asn-78 and Asn-86 each carry an N-linked (GlcNAc...) asparagine glycan. The helical transmembrane segment at 114–139 (LVIVILAITLGTFTVLENFVVLCVIL) threads the bilayer. At 140–151 (HSHTLRSRPSYH) the chain is on the cytoplasmic side. Residues 152–172 (FIGSLAVADLIGSIIFVYSFL) form a helical membrane-spanning segment. Over 173-184 (DFHVLHRKDSPS) the chain is Extracellular. The chain crosses the membrane as a helical span at residues 185–209 (IFLFKLAGVIASFTASVGSLFLTAI). Over 210–229 (DRYVSIHRPMAYKRIITKTK) the chain is Cytoplasmic. The helical transmembrane segment at 230–252 (AVIAFSVMWAISIEFSLLPLLGW) threads the bilayer. Residues 253 to 270 (NCKRLHSVCSDIFPLIDE) lie on the Extracellular side of the membrane. A helical transmembrane segment spans residues 271 to 296 (KYLMFWIGMTTVLLLFIIYAYMFILW). Topologically, residues 297 to 341 (KSHHHAVRMLSRSSQRSIIVYTSEGTKVQTVRPEQARMDLRLAKT) are cytoplasmic. The helical transmembrane segment at 342–362 (LVLILVALIICWGPLLAIMVY) threads the bilayer. Residues 363 to 374 (DLFGRVNDFIKT) are Extracellular-facing. Residues 375-396 (VFAFCSMLCLLNSTINPVIYAM) traverse the membrane as a helical segment. The Cytoplasmic portion of the chain corresponds to 397–470 (RSKDLRRAFV…VTASSPAEAV (74 aa)). Cys-412 carries the S-palmitoyl cysteine lipid modification. Polar residues predominate over residues 418–434 (SLDSSAESDWNSRSVRS). The segment at 418 to 450 (SLDSSAESDWNSRSVRSTGGRAGKDRSVGGKPQ) is disordered.

The protein belongs to the G-protein coupled receptor 1 family. In terms of processing, palmitoylation at Cys-412 is important for recruitment at both plasma membrane and lipid rafts and association with G protein alpha subunits.

Its subcellular location is the cell membrane. The protein resides in the mitochondrion outer membrane. The protein localises to the cell projection. It is found in the axon. It localises to the presynapse. Its function is as follows. G-protein coupled receptor for cannabinoids. Mediates many cannabinoid-induced effects in the central nervous system (CNS), as well as in peripheral tissues. Regulates cellular respiration and energy production in response to cannabinoids. Signaling typically involves reduction in cyclic AMP. The sequence is that of Cannabinoid receptor type 1B (cnr1b) from Takifugu rubripes (Japanese pufferfish).